Consider the following 113-residue polypeptide: Large ribosomal subunit protein uL22 (113 aa).

This sequence belongs to the universal ribosomal protein uL22 family. As to quaternary structure, part of the 50S ribosomal subunit.

Functionally, this protein binds specifically to 23S rRNA; its binding is stimulated by other ribosomal proteins, e.g. L4, L17, and L20. It is important during the early stages of 50S assembly. It makes multiple contacts with different domains of the 23S rRNA in the assembled 50S subunit and ribosome. The globular domain of the protein is located near the polypeptide exit tunnel on the outside of the subunit, while an extended beta-hairpin is found that lines the wall of the exit tunnel in the center of the 70S ribosome. The polypeptide is Large ribosomal subunit protein uL22 (Xanthomonas oryzae pv. oryzae (strain MAFF 311018)).